A 352-amino-acid polypeptide reads, in one-letter code: Secreted RxLR effector protein 122 (352 aa).

Positions 1–21 (MRGAYYVLIALLVVASSQTSA) are cleaved as a signal peptide. The RxLR-dEER motif lies at 48 to 65 (QFLRGSRNVPGDLAHEER). A compositionally biased stretch (low complexity) spans 280-290 (RGGTTGASRGT). Residues 280-352 (RGGTTGASRG…VEPEGHRSKP (73 aa)) form a disordered region. A compositionally biased stretch (polar residues) spans 302–315 (AASTSKGKSSVFTE).

It belongs to the RxLR effector family.

The protein localises to the secreted. It localises to the host nucleus. Functionally, secreted effector that acts as an elicitor that induces cell death in host plant cells. This is Secreted RxLR effector protein 122 from Plasmopara viticola (Downy mildew of grapevine).